Consider the following 217-residue polypeptide: DNA helicase assembly protein (217 aa).

Belongs to the Tequatrovirus DNA helicase assembly protein family. Monomer. Homohexamer; when associated with DNA. Interacts (via C-terminus) with the DnaB-like replicative helicase (via C-terminus); this interaction brings about the rapid assembly of the helicase onto ssDNA. Interacts (via C-terminus) with the single-stranded DNA-binding protein; a ternary complex between the helicase assembly protein, the single-stranded DNA-binding protein and ssDNA is an obligatory intermediate in the helicase loading mechanism. Interacts with the viral DNA polymerase. Binds to single and double-stranded DNA. Part of the replicase complex that includes the DNA polymerase, the polymerase clamp, the clamp loader complex, the single-stranded DNA binding protein (SSB), the primase, the DnaB-like replicative helicase and the helicase assembly factor.

In terms of biological role, DNA helicase loader protein that participates in viral DNA replication, recombination, and repair. At the fork, required for loading of the replicative helicase onto DNA protected by the ssDNA-binding protein. Coordinates simultaneous synthesis of leading- and lagging-strands. The protein is DNA helicase assembly protein of Enterobacteria phage T4 (Bacteriophage T4).